Consider the following 194-residue polypeptide: dCTP deaminase, dUMP-forming (194 aa).

DCTP contacts are provided by residues 104-109 (RSSLGR), D122, 130-132 (TLE), Q151, Y165, K172, and Q176. E132 (proton donor/acceptor) is an active-site residue.

Belongs to the dCTP deaminase family. As to quaternary structure, homotrimer.

The catalysed reaction is dCTP + 2 H2O = dUMP + NH4(+) + diphosphate. It participates in pyrimidine metabolism; dUMP biosynthesis; dUMP from dCTP: step 1/1. Its function is as follows. Bifunctional enzyme that catalyzes both the deamination of dCTP to dUTP and the hydrolysis of dUTP to dUMP without releasing the toxic dUTP intermediate. The chain is dCTP deaminase, dUMP-forming from Dictyoglomus turgidum (strain DSM 6724 / Z-1310).